The primary structure comprises 117 residues: Large ribosomal subunit protein uL18 (117 aa).

The protein belongs to the universal ribosomal protein uL18 family. As to quaternary structure, part of the 50S ribosomal subunit; part of the 5S rRNA/L5/L18/L25 subcomplex. Contacts the 5S and 23S rRNAs.

Its function is as follows. This is one of the proteins that bind and probably mediate the attachment of the 5S RNA into the large ribosomal subunit, where it forms part of the central protuberance. The polypeptide is Large ribosomal subunit protein uL18 (Pasteurella multocida (strain Pm70)).